Reading from the N-terminus, the 649-residue chain is Transcription factor tau 95 kDa subunit (649 aa).

The disordered stretch occupies residues 1–21 (MPVEEPLATLSSIPDSSADQA). Residues 9–19 (TLSSIPDSSAD) are compositionally biased toward polar residues. Copy 1 of the repeat occupies 221-239 (PSTDFQLPPPPKLSMVGFP). The 2 X repeats, Pro-rich stretch occupies residues 221–419 (PSTDFQLPPP…PPLVFESDTP (199 aa)). Residues 296 to 300 (AKKTK) carry the Nuclear localization signal motif. Repeat 2 spans residues 400 to 419 (PIVKKNVPKPPPLVFESDTP). The disordered stretch occupies residues 556–612 (IAAGDDFDDNGAITEEPDDAALENEEMDTDQNLKVPASIDDDVDDVDADEEEQESFD). Composition is skewed to acidic residues over residues 560–584 (DDFD…EMDT) and 594–610 (IDDD…EQES). Position 617 is a phosphoserine (Ser617).

It belongs to the TFIIIC subunit 5 family. In terms of assembly, component of the TFIIIC complex composed of TFC1, TFC3, TFC4, TFC6, TFC7 and TFC8. The subunits are organized in two globular domains, tauA and tauB, connected by a proteolysis-sensitive and flexible linker. Interacts with TFC3, TFC4 and TFC6.

Its subcellular location is the nucleus. TFIIIC mediates tRNA and 5S RNA gene activation by binding to intragenic promoter elements. Upstream of the transcription start site, TFIIIC assembles the initiation complex TFIIIB-TFIIIC-tDNA, which is sufficient for RNA polymerase III recruitment and function. Part of the tauA domain of TFIIIC that binds boxA DNA promoter sites of tRNA and similar genes. Participates in the interconnection of tauA with tauB via its contacts with TFC3 and TFC6. Serves as a scaffold critical for tauA-DNA spatial configuration and tauB-DNA stability. This Saccharomyces cerevisiae (strain ATCC 204508 / S288c) (Baker's yeast) protein is Transcription factor tau 95 kDa subunit (TFC1).